We begin with the raw amino-acid sequence, 508 residues long: Cobyric acid synthase (508 aa).

In terms of domain architecture, GATase cobBQ-type spans 255–454 (ELNIAVLKLP…LHGVFESGPW (200 aa)). C336 serves as the catalytic Nucleophile. The active site involves H446.

This sequence belongs to the CobB/CobQ family. CobQ subfamily.

It participates in cofactor biosynthesis; adenosylcobalamin biosynthesis. Functionally, catalyzes amidations at positions B, D, E, and G on adenosylcobyrinic A,C-diamide. NH(2) groups are provided by glutamine, and one molecule of ATP is hydrogenolyzed for each amidation. The protein is Cobyric acid synthase of Synechococcus sp. (strain CC9311).